A 176-amino-acid polypeptide reads, in one-letter code: Lipoprotein signal peptidase (176 aa).

4 helical membrane passes run 26–46 (LWLA…IVIV), 57–77 (VTGF…SFLA), 82–102 (WQRW…VWLL), and 111–131 (FCFA…DRVI). Residues D137 and D155 contribute to the active site. The chain crosses the membrane as a helical span at residues 147–167 (HWPAFNVADCAITVGAVLLIV).

It belongs to the peptidase A8 family.

The protein resides in the cell inner membrane. It carries out the reaction Release of signal peptides from bacterial membrane prolipoproteins. Hydrolyzes -Xaa-Yaa-Zaa-|-(S,diacylglyceryl)Cys-, in which Xaa is hydrophobic (preferably Leu), and Yaa (Ala or Ser) and Zaa (Gly or Ala) have small, neutral side chains.. It participates in protein modification; lipoprotein biosynthesis (signal peptide cleavage). This protein specifically catalyzes the removal of signal peptides from prolipoproteins. This chain is Lipoprotein signal peptidase, found in Cupriavidus taiwanensis (strain DSM 17343 / BCRC 17206 / CCUG 44338 / CIP 107171 / LMG 19424 / R1) (Ralstonia taiwanensis (strain LMG 19424)).